The chain runs to 199 residues: Putative peroxiredoxin ycf42 (199 aa).

One can recognise a Thioredoxin domain in the interval 8–165 (LQVGQIAPDF…TLRVLQAIQY (158 aa)). The active-site Cysteine sulfenic acid (-SOH) intermediate is the Cys53.

Belongs to the peroxiredoxin family. AhpC/Prx1 subfamily. In terms of assembly, homodimer; disulfide-linked, upon oxidation. Post-translationally, the Cys-53-SH group is the primary site of oxidation by H(2)O(2), and the oxidized Cys-53 (probably Cys-SOH) rapidly reacts with Cys-174-SH of the other subunit to form an intermolecular disulfide. This disulfide is subsequently reduced by thioredoxin.

It is found in the plastid. The protein resides in the chloroplast. It catalyses the reaction a hydroperoxide + [thioredoxin]-dithiol = an alcohol + [thioredoxin]-disulfide + H2O. In terms of biological role, thiol-specific peroxidase that catalyzes the reduction of hydrogen peroxide and organic hydroperoxides to water and alcohols, respectively. Plays a role in cell protection against oxidative stress by detoxifying peroxides. This Porphyra purpurea (Red seaweed) protein is Putative peroxiredoxin ycf42 (ycf42).